The chain runs to 305 residues: Tetraspanin-12 (305 aa).

Residues 1 to 12 are Cytoplasmic-facing; the sequence is MAREDSVKCLRC. Residues Cys-9 and Cys-12 are each lipidated (S-palmitoyl cysteine). A helical transmembrane segment spans residues 13 to 33; that stretch reads LLYALNLLFWLMSISVLAVSA. Topologically, residues 34-59 are extracellular; it reads WMRDYLNNVLTLTAETRVEEAVILTY. Residues 60 to 80 form a helical membrane-spanning segment; the sequence is FPVVHPVMIAVCCFLIIVGML. Topologically, residues 81-89 are cytoplasmic; it reads GYCGTVKRN. Cys-83 is lipidated: S-palmitoyl cysteine. The chain crosses the membrane as a helical span at residues 90-110; that stretch reads LLLLAWYFGSLLVIFCVELAC. The Extracellular segment spans residues 111-224; sequence GVWTYEQEIM…RGTKQLQVLR (114 aa). Residues 225–245 form a helical membrane-spanning segment; it reads FLGISIGVTQILAMILTITLL. The Cytoplasmic segment spans residues 246-305; that stretch reads WALYYDRREPGTDQMMALKNDTTQHLPCHSVELLKPSLSRIFEHTSMANSFNTHFEMEEL.

The protein belongs to the tetraspanin (TM4SF) family. As to quaternary structure, component of a complex, at least composed of TSPAN12, FZD4 and norrin (NDP). Interacts (when palmitoylated) with ADAM10. Interacts with MMP14/MT1-MMP. Post-translationally, palmitoylated; required for interaction with ADAM10. The precise position of palmitoylated residues is unclear and occurs either on Cys-9, Cys-12 and/or Cys-83.

It is found in the cell membrane. Its function is as follows. Regulator of cell surface receptor signal transduction. Plays a central role in retinal vascularization by regulating norrin (NDP) signal transduction. Acts in concert with norrin (NDP) to promote FZD4 multimerization and subsequent activation of FZD4, leading to promote accumulation of beta-catenin (CTNNB1) and stimulate LEF/TCF-mediated transcriptional programs. Suprisingly, it only activates the norrin (NDP)-dependent activation of FZD4, while it does not activate the Wnt-dependent activation of FZD4, suggesting the existence of a Wnt-independent signaling that also promote accumulation the beta-catenin (CTNNB1). Acts as a regulator of membrane proteinases such as ADAM10 and MMP14/MT1-MMP. Activates ADAM10-dependent cleavage activity of amyloid precursor protein (APP). Activates MMP14/MT1-MMP-dependent cleavage activity. This is Tetraspanin-12 (TSPAN12) from Bos taurus (Bovine).